The primary structure comprises 596 residues: Elongation factor 4 (596 aa).

Residues 2–183 (KNIRNFSIIA…AIVDRIPAPV (182 aa)) form the tr-type G domain. GTP-binding positions include 14-19 (DHGKST) and 130-133 (NKID).

Belongs to the TRAFAC class translation factor GTPase superfamily. Classic translation factor GTPase family. LepA subfamily.

It is found in the cell inner membrane. It catalyses the reaction GTP + H2O = GDP + phosphate + H(+). Required for accurate and efficient protein synthesis under certain stress conditions. May act as a fidelity factor of the translation reaction, by catalyzing a one-codon backward translocation of tRNAs on improperly translocated ribosomes. Back-translocation proceeds from a post-translocation (POST) complex to a pre-translocation (PRE) complex, thus giving elongation factor G a second chance to translocate the tRNAs correctly. Binds to ribosomes in a GTP-dependent manner. The polypeptide is Elongation factor 4 (Sulfurimonas denitrificans (strain ATCC 33889 / DSM 1251) (Thiomicrospira denitrificans (strain ATCC 33889 / DSM 1251))).